A 279-amino-acid polypeptide reads, in one-letter code: MTYADQVFKQNIQNILDNGVFSENARPKYKDGQMANSKYVTGSFVTYDLQKGEFPITTLRPIPIKSAIKELMWIYQDQTSELSVLEEKYGVKYWGEWRIGDGTIGQRYGATVKKYNIIGKLLEGLAKNPWNRRNIINLWQYEDFEETEGLLPCAFQTMFDVRREKDGQIYLDATLIQRSNDMLVAHHINAMQYVALQMMIAKHFSWKVGKFFYFVNNLHIYDNQFEQANELMKRTASEKEPRLVLNVPDGTNFFDIKPEDFELVDYEPVKPQLKFDLAI.

Residue R132–R133 participates in dUMP binding. C153 acts as the Nucleophile in catalysis. DUMP contacts are provided by residues R178–D181, N189, and H219–Y221. D181 is a (6R)-5,10-methylene-5,6,7,8-tetrahydrofolate binding site. A278 serves as a coordination point for (6R)-5,10-methylene-5,6,7,8-tetrahydrofolate.

The protein belongs to the thymidylate synthase family. Bacterial-type ThyA subfamily. Homodimer.

It is found in the cytoplasm. The catalysed reaction is dUMP + (6R)-5,10-methylene-5,6,7,8-tetrahydrofolate = 7,8-dihydrofolate + dTMP. Its pathway is pyrimidine metabolism; dTTP biosynthesis. Its function is as follows. Catalyzes the reductive methylation of 2'-deoxyuridine-5'-monophosphate (dUMP) to 2'-deoxythymidine-5'-monophosphate (dTMP) while utilizing 5,10-methylenetetrahydrofolate (mTHF) as the methyl donor and reductant in the reaction, yielding dihydrofolate (DHF) as a by-product. This enzymatic reaction provides an intracellular de novo source of dTMP, an essential precursor for DNA biosynthesis. The polypeptide is Thymidylate synthase (Lactococcus lactis subsp. cremoris (strain SK11)).